A 565-amino-acid chain; its full sequence is Protein unc-87 (565 aa).

The span at 1–27 (MLSFNNTTSASSFQSASSRYLMSSSSS) shows a compositional bias: low complexity. Disordered stretches follow at residues 1-83 (MLSF…TTNS) and 237-262 (IPSQ…RNTN). Residues 54 to 69 (EALERLRPNTASRERN) show a composition bias toward basic and acidic residues. 3 Calponin-like repeats span residues 237-262 (IPSQ…RNTN), 285-310 (VRLQ…RDVC), and 338-363 (VRLQ…RRET). A compositionally biased stretch (polar residues) spans 250 to 262 (KLMTNFGTPRNTN). The segment covering 369 to 381 (SKHPEYDHEKPDQ) has biased composition (basic and acidic residues). Positions 369-400 (SKHPEYDHEKPDQSEIPLQSGTNKFASQKGMT) are disordered. Residues 384–398 (IPLQSGTNKFASQKG) show a composition bias toward polar residues. Calponin-like repeat units lie at residues 384 to 409 (IPLQ…RRET), 431 to 456 (IPSQ…RWEV), 472 to 497 (VRLQ…RNTT), and 517 to 542 (IPSQ…RDVK).

The protein belongs to the calponin family. Monomer. Interacts with F-actin. Interacts with myosin. As to expression, expressed in the body wall muscles. Isoform a: Expression in the pharynx, anal depressor muscle, uterine muscle, vulva and unidentified neurons in the head and the ventral region. Isoform b: Expression in the body wall muscles, spermatheca, vulva and in the myoepithelial sheath.

It is found in the cytoplasm. The protein resides in the myofibril. The protein localises to the sarcomere. It localises to the i band. Its function is as follows. Thin filament-associated protein that is implicated in actin bundling and actin filament dynamics. Exhibits F-actin cross-linking activity. Required for the maintenance of sarcomeric actin organization in striated muscles. Competes with unc-60 isoform b for actin binding and protects actin filaments from depolymerization by unc-60, thereby contributing to actin filament stability. Cooperates with myosin to form actomyosin bundles and inhibits actomyosin ATPase activity and actomyosin motility. Might protect the myofilaments from mechanical stress. Acts as a negative regulator of myosin-dependent contractility of smooth muscle-like cells in the somatic gonad. The polypeptide is Protein unc-87 (unc-87) (Caenorhabditis elegans).